Reading from the N-terminus, the 476-residue chain is MNNAVKEQLAELGIEGYLNQHQHKSLLRFLTCGSVDDGKSTLIGRLLHDSKQIYEDQLAAVHNDSQRVGTTGSRPDLALLVDGLQAEREQGITIDVAYRYFSTQKRKFIIADTPGHEQYTRNMATGASTCDLAVILIDARKGVLDQTRRHSFISNLLGLKHFIVAVNKMDLVDYSQDRFEQIRAEYLEFSKHLQGETEIQIIPLSALEGDNVVEKSRLMDWYQGPSLLELLEYVDIDRDKSSGAFRFPVQYVNRPNLDFRGFAGTIASGVVKVGDKIKALPSGKTSTVTRIVTFDGDLPQAQAGLAVTLTLADEIDISRGDLIVLESAQVDSTNHLLADVVWMTEQPLQVGRDYDIKIAGKKTVGQVKAVRHQYDINNLSTYHAESLPLNGIGLCEWTFTQTVALDKYLDCADTGGFIIIDRLTNVTVGAGLVRDSLQNITGQTESFSAFELELNALVRKHFPHWQAIDLSRLGKA.

In terms of domain architecture, tr-type G spans 24–238 (KSLLRFLTCG…ELLEYVDIDR (215 aa)). The G1 stretch occupies residues 33–40 (GSVDDGKS). 33-40 (GSVDDGKS) is a GTP binding site. The segment at 91–95 (GITID) is G2. Residues 112 to 115 (DTPG) form a G3 region. GTP is bound by residues 112–116 (DTPGH) and 167–170 (NKMD). Residues 167-170 (NKMD) are G4. The tract at residues 205-207 (SAL) is G5.

This sequence belongs to the TRAFAC class translation factor GTPase superfamily. Classic translation factor GTPase family. CysN/NodQ subfamily. As to quaternary structure, heterodimer composed of CysD, the smaller subunit, and CysN.

The enzyme catalyses sulfate + ATP + H(+) = adenosine 5'-phosphosulfate + diphosphate. It participates in sulfur metabolism; hydrogen sulfide biosynthesis; sulfite from sulfate: step 1/3. Functionally, with CysD forms the ATP sulfurylase (ATPS) that catalyzes the adenylation of sulfate producing adenosine 5'-phosphosulfate (APS) and diphosphate, the first enzymatic step in sulfur assimilation pathway. APS synthesis involves the formation of a high-energy phosphoric-sulfuric acid anhydride bond driven by GTP hydrolysis by CysN coupled to ATP hydrolysis by CysD. The sequence is that of Sulfate adenylyltransferase subunit 1 from Vibrio cholerae serotype O1 (strain M66-2).